The chain runs to 205 residues: Probable transcription factor Ken (205 aa).

3 consecutive C2H2-type zinc fingers follow at residues 106 to 128 (YRCE…LRVH), 134 to 157 (FACR…CSVH), and 173 to 196 (YSCC…SGHH).

The protein localises to the nucleus. In terms of biological role, probable transcription factor, which is required for terminalia development. The sequence is that of Probable transcription factor Ken (ken) from Drosophila yakuba (Fruit fly).